Reading from the N-terminus, the 309-residue chain is uncharacterized protein (309 aa).

The segment at 272-291 (PSLDAPSETVEAFPEPQKNL) is disordered.

This is an uncharacterized protein from Bacillus subtilis (strain 168).